The following is a 35-amino-acid chain: Natriuretic peptide TNPa (35 aa).

The cysteines at positions 9 and 25 are disulfide-linked.

Expressed by the venom gland.

Its subcellular location is the secreted. In terms of biological role, snake venom natriuretic peptide that exhibits vasoactive and probable hypotensive activity. Is only weakly active on natriuretic peptide receptor-C (NPR3). Stimulates cGMP production through the natriuretic peptide receptor 1 (NPR1) with moderate potencies for the rat NPR1 (EC(50)=2020 nM), and very weak potencies over human NPR1 (15% activation at 10 uM). In vivo, does not impact systolic and diastolic blood pressure, as well as heart rate, when intravenously injected in conscious rabbits. Does not affect the bradycardia due to cardiac afferent stimulation (Bezold-Jarisch reflex). The protein is Natriuretic peptide TNPa of Oxyuranus microlepidotus (Inland taipan).